The following is an 82-amino-acid chain: ATP synthase subunit c (82 aa).

2 helical membrane passes run 7 to 27 and 57 to 77; these read AASV…PGIG and FAFM…LLFA.

Belongs to the ATPase C chain family. As to quaternary structure, F-type ATPases have 2 components, F(1) - the catalytic core - and F(0) - the membrane proton channel. F(1) has five subunits: alpha(3), beta(3), gamma(1), delta(1), epsilon(1). F(0) has four main subunits: a(1), b(1), b'(1) and c(10-14). The alpha and beta chains form an alternating ring which encloses part of the gamma chain. F(1) is attached to F(0) by a central stalk formed by the gamma and epsilon chains, while a peripheral stalk is formed by the delta, b and b' chains.

Its subcellular location is the cellular thylakoid membrane. Functionally, f(1)F(0) ATP synthase produces ATP from ADP in the presence of a proton or sodium gradient. F-type ATPases consist of two structural domains, F(1) containing the extramembraneous catalytic core and F(0) containing the membrane proton channel, linked together by a central stalk and a peripheral stalk. During catalysis, ATP synthesis in the catalytic domain of F(1) is coupled via a rotary mechanism of the central stalk subunits to proton translocation. Its function is as follows. Key component of the F(0) channel; it plays a direct role in translocation across the membrane. A homomeric c-ring of between 10-14 subunits forms the central stalk rotor element with the F(1) delta and epsilon subunits. This is ATP synthase subunit c from Prochlorococcus marinus (strain MIT 9303).